We begin with the raw amino-acid sequence, 401 residues long: Imidazolonepropionase (401 aa).

H70 and H72 together coordinate Fe(3+). Positions 70 and 72 each coordinate Zn(2+). R79, Y142, and H175 together coordinate 4-imidazolone-5-propanoate. Position 142 (Y142) interacts with N-formimidoyl-L-glutamate. H238 provides a ligand contact to Fe(3+). H238 is a Zn(2+) binding site. Position 241 (Q241) interacts with 4-imidazolone-5-propanoate. D313 serves as a coordination point for Fe(3+). Residue D313 coordinates Zn(2+). N-formimidoyl-L-glutamate-binding residues include N315 and G317. T318 is a binding site for 4-imidazolone-5-propanoate.

Belongs to the metallo-dependent hydrolases superfamily. HutI family. Requires Zn(2+) as cofactor. Fe(3+) serves as cofactor.

It localises to the cytoplasm. It carries out the reaction 4-imidazolone-5-propanoate + H2O = N-formimidoyl-L-glutamate. The protein operates within amino-acid degradation; L-histidine degradation into L-glutamate; N-formimidoyl-L-glutamate from L-histidine: step 3/3. Its function is as follows. Catalyzes the hydrolytic cleavage of the carbon-nitrogen bond in imidazolone-5-propanoate to yield N-formimidoyl-L-glutamate. It is the third step in the universal histidine degradation pathway. This Xanthomonas campestris pv. campestris (strain 8004) protein is Imidazolonepropionase.